Consider the following 1092-residue polypeptide: Fibrinogen-binding protein (1092 aa).

A signal peptide spans 1 to 51 (MINKKNNLLTKKKPIANKSNKYAIRKFTVGTASIVIGATLLFGLGHNEAKA). A compositionally biased stretch (basic and acidic residues) spans 50 to 63 (KAEENSVQDVKDSN). Positions 50 to 236 (KAEENSVQDV…GYTNIDEKIS (187 aa)) are disordered. The ligand binding A region stretch occupies residues 52-599 (EENSVQDVKD…GQGQGDLPPE (548 aa)). Residues 64–76 (TDDELSDSNDQSS) are compositionally biased toward acidic residues. A compositionally biased stretch (low complexity) spans 84–98 (INNNQSINTDDNNQI). Basic and acidic residues predominate over residues 99-119 (IKKEETNNYDGIEKRSEDRTE). Over residues 120-140 (STTNVDENEATFLQKTPQDNT) the composition is skewed to polar residues. A compositionally biased stretch (basic and acidic residues) spans 141–151 (HLTEEEVKESS). The segment covering 160-170 (IDTAQQPSHTT) has biased composition (polar residues). Over residues 195–220 (KIKESNTESGKEENTIEQPNKVKEDS) the composition is skewed to basic and acidic residues. Residues E294, S299, V302, and E309 each coordinate Ca(2+). The interaction with human fibrinogen stretch occupies residues 579–590 (YDNTIAFSTSSG). 2 CNA-B domains span residues 600–713 (KTYK…YQTP) and 714–824 (KYSL…YDDE). The disordered stretch occupies residues 780–1068 (KPSGMTQTTT…NEDYGSKGTL (289 aa)). Positions 791–801 (SGDDDEQDADG) are enriched in acidic residues. Positions 802 to 814 (EEVHVTITDHDDF) are enriched in basic and acidic residues. Over residues 820–1039 (YYDDESDSDS…DSDSDSDNDS (220 aa)) the composition is skewed to acidic residues. The LPXTG sorting signal signature appears at 1053–1057 (LPDTG). A Pentaglycyl murein peptidoglycan amidated threonine modification is found at T1056. The propeptide at 1057–1092 (GANEDYGSKGTLLGTLFAGLGALLLGKRRKNRKNKN) is removed by sortase.

It belongs to the serine-aspartate repeat-containing protein (SDr) family.

It localises to the secreted. The protein resides in the cell wall. Functionally, promotes bacterial attachment to both soluble and immobilized forms of fibrinogen in a dose-dependent manner. This binding occurs through the beta-chain of human fibrinogen. Could contribute to the initiation of foreign-body infection by allowing bacteria to adhere to biomaterial surfaces that have become coated with host proteins after implantation. Is important in the pathogenesis of central venous catheter (CVC)-associated infection model. The protein is Fibrinogen-binding protein (fbe) of Staphylococcus epidermidis.